The sequence spans 113 residues: Large ribosomal subunit protein uL22 (113 aa).

Belongs to the universal ribosomal protein uL22 family. In terms of assembly, part of the 50S ribosomal subunit.

In terms of biological role, this protein binds specifically to 23S rRNA; its binding is stimulated by other ribosomal proteins, e.g. L4, L17, and L20. It is important during the early stages of 50S assembly. It makes multiple contacts with different domains of the 23S rRNA in the assembled 50S subunit and ribosome. Functionally, the globular domain of the protein is located near the polypeptide exit tunnel on the outside of the subunit, while an extended beta-hairpin is found that lines the wall of the exit tunnel in the center of the 70S ribosome. This Bacillus thuringiensis subsp. konkukian (strain 97-27) protein is Large ribosomal subunit protein uL22.